Here is a 248-residue protein sequence, read N- to C-terminus: Glucosamine-6-phosphate isomerase (248 aa).

Residue Asp68 is the Proton acceptor; for enolization step of the active site. Glu137 (for ring-opening step) is an active-site residue. Catalysis depends on His139, which acts as the Proton acceptor; for ring-opening step. The active-site For ring-opening step is the Glu144.

It belongs to the glucosamine/galactosamine-6-phosphate isomerase family. In terms of assembly, monomer.

The enzyme catalyses alpha-D-glucosamine 6-phosphate + H2O = beta-D-fructose 6-phosphate + NH4(+). The polypeptide is Glucosamine-6-phosphate isomerase (NAG1) (Candida albicans (strain SC5314 / ATCC MYA-2876) (Yeast)).